Reading from the N-terminus, the 573-residue chain is MISNFILFALFIVTIALITKPLGSYIFRVFNNERTYLDWLAKPFQRVYLLVLGESSKKEQTAKAYFFSLVSFSVMAFIFVLVILLLQGILPLNPQEIKGMSFPQALNTAVSFITNTNWQSYSGETDVSYFAQMLALAVQNFVSAAVGLCVAIALIRSVARHETATIGNFWNDLGKGIFWILLPISIVIAIVYIFQGVPQNVMAYLHVHTLAGTEQIIPQGPIASQEAIKSLGTNGGGFFNANSAHPYENPTVITNYIQMVSIFAIAAALTYTFGKWVGNTKQGWLIFGVMLVLFIISLVVMTISELHGLDFLHSKDIQDIYGQVGHLSNMEGKESRFGVFYSTLYNTVSTSASDGGVNSVLDSYSPLAGMMAMLNMAIGEVIFGGVGAGFYGFFMFLMLAVFIGSLMIGRAPSFLGKRIEANDMKWTMFALLISPCCVLVFTGLAAVIPSVHQALTNSGAHGFSEILYAYISGANNNGSAFAGLSANTNYLNITIALSMLIGRFGVIFAVIMLAGSLVKKKRSLQMSEISSLDTTSFIFAILVFFTILLIGGLTIFPALGLGPILDQLNLNFL.

A run of 10 helical transmembrane segments spans residues 6 to 26, 66 to 86, 135 to 155, 177 to 197, 257 to 277, 283 to 303, 382 to 402, 428 to 448, 493 to 513, and 537 to 557; these read ILFA…GSYI, FFSL…ILLL, ALAV…IALI, IFWI…FQGV, IQMV…GKWV, GWLI…VMTI, IFGG…LAVF, MFAL…AAVI, ITIA…VIML, and FIFA…TIFP.

The protein belongs to the KdpA family. In terms of assembly, the system is composed of three essential subunits: KdpA, KdpB and KdpC.

The protein localises to the cell inner membrane. Functionally, part of the high-affinity ATP-driven potassium transport (or Kdp) system, which catalyzes the hydrolysis of ATP coupled with the electrogenic transport of potassium into the cytoplasm. This subunit binds the periplasmic potassium ions and delivers the ions to the membrane domain of KdpB through an intramembrane tunnel. In Francisella tularensis subsp. novicida (strain U112), this protein is Potassium-transporting ATPase potassium-binding subunit.